A 204-amino-acid chain; its full sequence is Large ribosomal subunit protein bL25 (204 aa).

Serine 123 is modified (phosphoserine).

The protein belongs to the bacterial ribosomal protein bL25 family. CTC subfamily. In terms of assembly, part of the 50S ribosomal subunit; part of the 5S rRNA/L5/L18/L25 subcomplex. Contacts the 5S rRNA. Binds to the 5S rRNA independently of L5 and L18.

This is one of the proteins that binds to the 5S RNA in the ribosome where it forms part of the central protuberance. In Pseudomonas aeruginosa (strain UCBPP-PA14), this protein is Large ribosomal subunit protein bL25.